We begin with the raw amino-acid sequence, 161 residues long: MMKIRIGNGYDIHRLVPERPLILGGIRLEHACGLLGHSDADVLTHAIMDALLGALSLGDIGHYFPPSDPQWAGADSQVLLAKVAALIAERGWRVGNIDAVVVAERPKLKPYLDPMRDRLATTLGIDRDQISIKATTNEKLGPVGREEGIAAYAVALLQSGM.

A divalent metal cation contacts are provided by Asp-11 and His-13. 4-CDP-2-C-methyl-D-erythritol 2-phosphate contacts are provided by residues 11–13 (DIH) and 37–38 (HS). His-45 contributes to the a divalent metal cation binding site. 4-CDP-2-C-methyl-D-erythritol 2-phosphate contacts are provided by residues 59 to 61 (DIG), 135 to 138 (TTNE), and Arg-145.

Belongs to the IspF family. As to quaternary structure, homotrimer. It depends on a divalent metal cation as a cofactor.

It carries out the reaction 4-CDP-2-C-methyl-D-erythritol 2-phosphate = 2-C-methyl-D-erythritol 2,4-cyclic diphosphate + CMP. The protein operates within isoprenoid biosynthesis; isopentenyl diphosphate biosynthesis via DXP pathway; isopentenyl diphosphate from 1-deoxy-D-xylulose 5-phosphate: step 4/6. Its function is as follows. Involved in the biosynthesis of isopentenyl diphosphate (IPP) and dimethylallyl diphosphate (DMAPP), two major building blocks of isoprenoid compounds. Catalyzes the conversion of 4-diphosphocytidyl-2-C-methyl-D-erythritol 2-phosphate (CDP-ME2P) to 2-C-methyl-D-erythritol 2,4-cyclodiphosphate (ME-CPP) with a corresponding release of cytidine 5-monophosphate (CMP). This chain is 2-C-methyl-D-erythritol 2,4-cyclodiphosphate synthase, found in Thermosynechococcus vestitus (strain NIES-2133 / IAM M-273 / BP-1).